An 868-amino-acid polypeptide reads, in one-letter code: Protein translocase subunit SecA (868 aa).

ATP contacts are provided by residues Gln-87, 105–109, and Asp-500; that span reads GEGKT. Cys-849, Cys-851, Cys-860, and His-861 together coordinate Zn(2+).

Belongs to the SecA family. As to quaternary structure, monomer and homodimer. Part of the essential Sec protein translocation apparatus which comprises SecA, SecYEG and auxiliary proteins SecDF-YajC and YidC. Zn(2+) serves as cofactor.

Its subcellular location is the cell membrane. The protein resides in the cytoplasm. The catalysed reaction is ATP + H2O + cellular proteinSide 1 = ADP + phosphate + cellular proteinSide 2.. In terms of biological role, part of the Sec protein translocase complex. Interacts with the SecYEG preprotein conducting channel. Has a central role in coupling the hydrolysis of ATP to the transfer of proteins into and across the cell membrane, serving both as a receptor for the preprotein-SecB complex and as an ATP-driven molecular motor driving the stepwise translocation of polypeptide chains across the membrane. This is Protein translocase subunit SecA from Wolbachia pipientis wMel.